The sequence spans 566 residues: Alpha-amylase (566 aa).

The signal sequence occupies residues 1 to 28 (MARRLATASLAVLAAAATALTAPTPAAA). Ca(2+) is bound by residues Asn-120, Gln-166, and Asp-175. Asp-205 functions as the Nucleophile in the catalytic mechanism. Residue His-209 coordinates Ca(2+). Residue Glu-232 is the Proton donor of the active site. The region spanning 465–566 (GPGTGQTSAS…ALTLNDTWRG (102 aa)) is the CBM20 domain.

The protein belongs to the glycosyl hydrolase 13 family. In terms of assembly, monomer. Ca(2+) is required as a cofactor.

It catalyses the reaction Endohydrolysis of (1-&gt;4)-alpha-D-glucosidic linkages in polysaccharides containing three or more (1-&gt;4)-alpha-linked D-glucose units.. This Streptomyces griseus protein is Alpha-amylase (amy).